The sequence spans 428 residues: UPF0597 protein PBPRB0240 (428 aa).

It belongs to the UPF0597 family.

The chain is UPF0597 protein PBPRB0240 from Photobacterium profundum (strain SS9).